The sequence spans 360 residues: Photosystem II protein D1 1 (360 aa).

A run of 3 helical transmembrane segments spans residues 29–46, 118–133, and 142–156; these read YIGWFGVLMIPTLLTATT, HFLIGIFCYLGRQWEL, and WICVAYSAPVAAATA. A chlorophyll a-binding site is contributed by histidine 118. Tyrosine 126 serves as a coordination point for pheophytin a. [CaMn4O5] cluster is bound by residues aspartate 170 and glutamate 189. The chain crosses the membrane as a helical span at residues 197-218; sequence FHMLGVAGVFGGALFAAMHGSL. Histidine 198 provides a ligand contact to chlorophyll a. A quinone-binding positions include histidine 215 and 264–265; that span reads SF. Histidine 215 provides a ligand contact to Fe cation. Histidine 272 lines the Fe cation pocket. Residues 274–288 traverse the membrane as a helical segment; the sequence is FLGAWPVVGIWFAAL. [CaMn4O5] cluster is bound by residues histidine 332, glutamate 333, aspartate 342, and alanine 344. Positions 345–360 are excised as a propeptide; it reads SGDAQMVALNAPAIEG.

Belongs to the reaction center PufL/M/PsbA/D family. PSII is composed of 1 copy each of membrane proteins PsbA, PsbB, PsbC, PsbD, PsbE, PsbF, PsbH, PsbI, PsbJ, PsbK, PsbL, PsbM, PsbT, PsbX, PsbY, PsbZ, Psb30/Ycf12, peripheral proteins PsbO, CyanoQ (PsbQ), PsbU, PsbV and a large number of cofactors. It forms dimeric complexes. The D1/D2 heterodimer binds P680, chlorophylls that are the primary electron donor of PSII, and subsequent electron acceptors. It shares a non-heme iron and each subunit binds pheophytin, quinone, additional chlorophylls, carotenoids and lipids. D1 provides most of the ligands for the Mn4-Ca-O5 cluster of the oxygen-evolving complex (OEC). There is also a Cl(-1) ion associated with D1 and D2, which is required for oxygen evolution. The PSII complex binds additional chlorophylls, carotenoids and specific lipids. serves as cofactor. Post-translationally, C-terminally processed by CtpA; processing is essential to allow assembly of the oxygen-evolving complex and photosynthetic growth. Tyr-161 forms a radical intermediate that is referred to as redox-active TyrZ, YZ or Y-Z. In terms of processing, C-terminally processed by CtpA; processing is essential to allow assembly of the oxygen-evolving complex and thus photosynthetic growth.

It localises to the cellular thylakoid membrane. The enzyme catalyses 2 a plastoquinone + 4 hnu + 2 H2O = 2 a plastoquinol + O2. Photosystem II (PSII) is a light-driven water:plastoquinone oxidoreductase that uses light energy to abstract electrons from H(2)O, generating O(2) and a proton gradient subsequently used for ATP formation. It consists of a core antenna complex that captures photons, and an electron transfer chain that converts photonic excitation into a charge separation. The D1/D2 (PsbA/PsbD) reaction center heterodimer binds P680, the primary electron donor of PSII as well as several subsequent electron acceptors. The polypeptide is Photosystem II protein D1 1 (Synechocystis sp. (strain ATCC 27184 / PCC 6803 / Kazusa)).